The chain runs to 778 residues: Tastin (778 aa).

Over residues 1–11 (MTTRQATKDPL) the composition is skewed to basic and acidic residues. The tract at residues 1-115 (MTTRQATKDP…PGPPAQTEAP (115 aa)) is disordered. Phosphoserine is present on residues Ser-16, Ser-98, and Ser-170. Residues 212 to 244 (ISPSGPSFHPSTRPSFQELRRETAGSSRTSVSQ) are disordered. Positions 235–244 (AGSSRTSVSQ) are enriched in polar residues. A phosphoserine mark is found at Ser-324, Ser-334, Ser-344, and Ser-362. At Thr-363 the chain carries Phosphothreonine. Phosphoserine is present on Ser-376. Disordered regions lie at residues 406 to 425 (EGSG…NRTP), 508 to 587 (ECGE…AEPR), and 600 to 641 (PESS…RVEL). Positions 513-523 (QPCPPAEPGPP) are enriched in pro residues. 4 tandem repeats follow at residues 516–548 (PPAE…PEPY), 549–581 (PPAE…PEPC), 582–614 (PPAE…PEPC), and 615–647 (PPAE…SEPC). Residues 516-647 (PPAEPGPPEA…RVELGASEPC (132 aa)) are 4 X 33 AA approximate tandem repeats. Residues 560 to 574 (CRSEPEIPESSRQEQ) are compositionally biased toward basic and acidic residues. Residues 612 to 622 (EPCPPAEPGPL) are compositionally biased toward pro residues.

As to quaternary structure, directly binds bystin, and indirectly trophinin. Strong expression at implantation sites. Was exclusively localized to the apical side of the syncytiotrophoblast. Also found in macrophages.

The protein resides in the cytoplasm. In terms of biological role, could be involved with bystin and trophinin in a cell adhesion molecule complex that mediates an initial attachment of the blastocyst to uterine epithelial cells at the time of the embryo implantation. In Homo sapiens (Human), this protein is Tastin (TROAP).